Here is a 119-residue protein sequence, read N- to C-terminus: Protein ELF4-LIKE 2 (119 aa).

The tract at residues 91-119 (SVDASSEGESTGTLKSDGKANNQKRFRSG) is disordered. The segment covering 93–111 (DASSEGESTGTLKSDGKAN) has biased composition (polar residues).

This sequence belongs to the EARLY FLOWERING 4 family. Homodimer.

It localises to the nucleus. Its function is as follows. Component of the central CCA1/LHY-TOC1 feedback loop in the circadian clock that promotes clock accuracy and is required for sustained rhythms in the absence of daily light/dark cycles. This Arabidopsis thaliana (Mouse-ear cress) protein is Protein ELF4-LIKE 2 (EFL2).